Consider the following 304-residue polypeptide: UDP-3-O-acyl-N-acetylglucosamine deacetylase (304 aa).

Positions 79, 238, and 242 each coordinate Zn(2+). The active-site Proton donor is His-265.

Belongs to the LpxC family. Zn(2+) serves as cofactor.

The catalysed reaction is a UDP-3-O-[(3R)-3-hydroxyacyl]-N-acetyl-alpha-D-glucosamine + H2O = a UDP-3-O-[(3R)-3-hydroxyacyl]-alpha-D-glucosamine + acetate. The protein operates within glycolipid biosynthesis; lipid IV(A) biosynthesis; lipid IV(A) from (3R)-3-hydroxytetradecanoyl-[acyl-carrier-protein] and UDP-N-acetyl-alpha-D-glucosamine: step 2/6. Catalyzes the hydrolysis of UDP-3-O-myristoyl-N-acetylglucosamine to form UDP-3-O-myristoylglucosamine and acetate, the committed step in lipid A biosynthesis. In Photobacterium profundum (strain SS9), this protein is UDP-3-O-acyl-N-acetylglucosamine deacetylase.